Here is a 368-residue protein sequence, read N- to C-terminus: Probable dual-specificity RNA methyltransferase RlmN (368 aa).

E100 serves as the catalytic Proton acceptor. One can recognise a Radical SAM core domain in the interval 106 to 344 (QHYGLSVCVT…CVVRQEHGTD (239 aa)). A disulfide bridge links C113 with C349. [4Fe-4S] cluster-binding residues include C120, C124, and C127. S-adenosyl-L-methionine-binding positions include 172 to 173 (GE), S204, 227 to 229 (SLH), and N305. The S-methylcysteine intermediate role is filled by C349.

It belongs to the radical SAM superfamily. RlmN family. [4Fe-4S] cluster is required as a cofactor.

It is found in the cytoplasm. It carries out the reaction adenosine(2503) in 23S rRNA + 2 reduced [2Fe-2S]-[ferredoxin] + 2 S-adenosyl-L-methionine = 2-methyladenosine(2503) in 23S rRNA + 5'-deoxyadenosine + L-methionine + 2 oxidized [2Fe-2S]-[ferredoxin] + S-adenosyl-L-homocysteine. It catalyses the reaction adenosine(37) in tRNA + 2 reduced [2Fe-2S]-[ferredoxin] + 2 S-adenosyl-L-methionine = 2-methyladenosine(37) in tRNA + 5'-deoxyadenosine + L-methionine + 2 oxidized [2Fe-2S]-[ferredoxin] + S-adenosyl-L-homocysteine. Specifically methylates position 2 of adenine 2503 in 23S rRNA and position 2 of adenine 37 in tRNAs. The protein is Probable dual-specificity RNA methyltransferase RlmN of Streptococcus agalactiae serotype V (strain ATCC BAA-611 / 2603 V/R).